The sequence spans 98 residues: uncharacterized protein (98 aa).

This is an uncharacterized protein from Archaeoglobus fulgidus (strain ATCC 49558 / DSM 4304 / JCM 9628 / NBRC 100126 / VC-16).